The following is a 413-amino-acid chain: Dual-specificity RNA methyltransferase RlmN (413 aa).

The active-site Proton acceptor is the E126. Residues 132–381 (EEGRGTLCIS…IRTPRGRDIL (250 aa)) form the Radical SAM core domain. C139 and C384 are disulfide-bonded. Residues C146, C150, and C153 each coordinate [4Fe-4S] cluster. S-adenosyl-L-methionine contacts are provided by residues 210 to 211 (GE), S242, 264 to 266 (SLH), and N341. Residue C384 is the S-methylcysteine intermediate of the active site.

It belongs to the radical SAM superfamily. RlmN family. [4Fe-4S] cluster is required as a cofactor.

The protein resides in the cytoplasm. It catalyses the reaction adenosine(2503) in 23S rRNA + 2 reduced [2Fe-2S]-[ferredoxin] + 2 S-adenosyl-L-methionine = 2-methyladenosine(2503) in 23S rRNA + 5'-deoxyadenosine + L-methionine + 2 oxidized [2Fe-2S]-[ferredoxin] + S-adenosyl-L-homocysteine. The enzyme catalyses adenosine(37) in tRNA + 2 reduced [2Fe-2S]-[ferredoxin] + 2 S-adenosyl-L-methionine = 2-methyladenosine(37) in tRNA + 5'-deoxyadenosine + L-methionine + 2 oxidized [2Fe-2S]-[ferredoxin] + S-adenosyl-L-homocysteine. Specifically methylates position 2 of adenine 2503 in 23S rRNA and position 2 of adenine 37 in tRNAs. m2A2503 modification seems to play a crucial role in the proofreading step occurring at the peptidyl transferase center and thus would serve to optimize ribosomal fidelity. This is Dual-specificity RNA methyltransferase RlmN from Sinorhizobium medicae (strain WSM419) (Ensifer medicae).